A 422-amino-acid chain; its full sequence is Elongation factor 1-gamma (422 aa).

In terms of domain architecture, GST N-terminal spans 1–82 (MALVLHAGKT…YVARLKADNP (82 aa)). Residues 87–215 (SLIDYAHIEQ…VKQTESVPPV (129 aa)) form the GST C-terminal domain. A disordered region spans residues 210 to 269 (ESVPPVPSAKKPSQPKETKSKAKEEPKKEAKKEPAKPKAEAAEEVEEAPKPKPKNPLDLL). The span at 223–250 (QPKETKSKAKEEPKKEAKKEPAKPKAEA) shows a compositional bias: basic and acidic residues. The region spanning 262 to 422 (PKNPLDLLPP…EALLDAKCFK (161 aa)) is the EF-1-gamma C-terminal domain.

In terms of assembly, EF-1 is composed of four subunits: alpha, beta, delta, and gamma.

In terms of biological role, probably plays a role in anchoring the complex to other cellular components. The sequence is that of Elongation factor 1-gamma from Prunus avium (Cherry).